The chain runs to 412 residues: 2,3-bisphosphoglycerate-independent phosphoglycerate mutase (412 aa).

The protein belongs to the BPG-independent phosphoglycerate mutase family. A-PGAM subfamily.

The enzyme catalyses (2R)-2-phosphoglycerate = (2R)-3-phosphoglycerate. Its pathway is carbohydrate degradation; glycolysis; pyruvate from D-glyceraldehyde 3-phosphate: step 3/5. Catalyzes the interconversion of 2-phosphoglycerate and 3-phosphoglycerate. This Pyrococcus horikoshii (strain ATCC 700860 / DSM 12428 / JCM 9974 / NBRC 100139 / OT-3) protein is 2,3-bisphosphoglycerate-independent phosphoglycerate mutase (apgM).